Reading from the N-terminus, the 379-residue chain is Gonadotropin-releasing hormone II receptor (379 aa).

The Extracellular segment spans residues Met-1–Arg-45. N-linked (GlcNAc...) asparagine glycosylation is found at Asn-4, Asn-18, and Asn-23. The helical transmembrane segment at Val-46–Leu-65 threads the bilayer. The Cytoplasmic portion of the chain corresponds to Ser-66–Arg-80. The helical transmembrane segment at Pro-81–Leu-100 threads the bilayer. The Extracellular portion of the chain corresponds to Asp-101–Lys-118. Asn-105 carries N-linked (GlcNAc...) asparagine glycosylation. Cys-117 and Cys-194 are joined by a disulfide. Residues Leu-119–Leu-140 traverse the membrane as a helical segment. Residues Asp-141–Trp-167 lie on the Cytoplasmic side of the membrane. A helical membrane pass occupies residues Ile-168–Ile-184. Topologically, residues Lys-185–Asn-210 are extracellular. The chain crosses the membrane as a helical span at residues Met-211 to Thr-230. The Cytoplasmic portion of the chain corresponds to Arg-231–Thr-283. A helical membrane pass occupies residues Pro-284–Ile-302. The Extracellular portion of the chain corresponds to Pro-303–His-308. Residues Val-309–Phe-328 form a helical membrane-spanning segment. Residues Thr-329–Gln-379 are Cytoplasmic-facing. The interval Phe-355–Gln-379 is disordered.

Belongs to the G-protein coupled receptor 1 family. Post-translationally, phosphorylated on the C-terminal cytoplasmic tail.

Its subcellular location is the cell membrane. Functionally, receptor for gonadotropin releasing hormone II (GnRH II). This receptor mediates its action by association with G proteins that activate a phosphatidylinositol-calcium second messenger system. This Clarias gariepinus (North African catfish) protein is Gonadotropin-releasing hormone II receptor.